The primary structure comprises 651 residues: p-hydroxybenzoic acid efflux pump subunit AaeB (651 aa).

The next 11 helical transmembrane spans lie at Phe11 to Leu31, Ala41 to Ile61, Leu67 to Ile87, Val91 to Val111, Phe119 to Leu139, Glu150 to Ile170, Leu368 to Val388, Phe405 to Pro425, Gln429 to Val449, Gly455 to Phe475, and Leu481 to Ile501.

It belongs to the aromatic acid exporter ArAE (TC 2.A.85) family.

The protein resides in the cell inner membrane. Its function is as follows. Forms an efflux pump with AaeA. Could function as a metabolic relief valve, allowing to eliminate certain compounds when they accumulate to high levels in the cell. The sequence is that of p-hydroxybenzoic acid efflux pump subunit AaeB from Yersinia pseudotuberculosis serotype O:1b (strain IP 31758).